Consider the following 210-residue polypeptide: Glycerol-3-phosphate acyltransferase (210 aa).

The next 5 helical transmembrane spans lie at alanine 10–isoleucine 30, proline 59–alanine 79, alanine 87–phenylalanine 107, phenylalanine 116–leucine 136, and leucine 161–isoleucine 181.

It belongs to the PlsY family. As to quaternary structure, probably interacts with PlsX.

The protein localises to the cell inner membrane. The enzyme catalyses an acyl phosphate + sn-glycerol 3-phosphate = a 1-acyl-sn-glycero-3-phosphate + phosphate. The protein operates within lipid metabolism; phospholipid metabolism. Functionally, catalyzes the transfer of an acyl group from acyl-phosphate (acyl-PO(4)) to glycerol-3-phosphate (G3P) to form lysophosphatidic acid (LPA). This enzyme utilizes acyl-phosphate as fatty acyl donor, but not acyl-CoA or acyl-ACP. This is Glycerol-3-phosphate acyltransferase from Cereibacter sphaeroides (strain ATCC 17025 / ATH 2.4.3) (Rhodobacter sphaeroides).